The following is a 27-amino-acid chain: Protein YkiD (27 aa).

This chain is Protein YkiD, found in Escherichia coli (strain K12).